The chain runs to 88 residues: uncharacterized protein (88 aa).

This is an uncharacterized protein from Treponema pallidum (strain Nichols).